Here is a 312-residue protein sequence, read N- to C-terminus: Small ribosomal subunit protein RACK1 (312 aa).

WD repeat units lie at residues 9–42 (GHRGWVTSLACPQQAGSYIKVVSTSRDGTAISWK), 63–93 (GHTGFVSCVSLAHATDYALTASWDRSIRMWD), 105–135 (KHTKDVLAVAFSPDDRLIVSAGRDNVIRVWN), 148–180 (GHEDWVSSICFSPSLEHPIVVSGSWDNTIKVWN), 192–222 (GHSNYVSTVTVSPDGSLCASGGKDGAALLWD), 233–262 (NVESPINQIAFSPNRFWMCVATERSLSVYD), and 279–307 (PSECISIAWSADGNTLYSGHKDNLIRVWS).

This sequence belongs to the WD repeat G protein beta family. Ribosomal protein RACK1 subfamily.

In Leishmania chagasi, this protein is Small ribosomal subunit protein RACK1.